Reading from the N-terminus, the 922-residue chain is Histidine kinase 5 (922 aa).

Coiled-coil stretches lie at residues 86 to 120 (MQDN…EEYK) and 169 to 205 (KQKA…SQSA). The 242-residue stretch at 373–614 (TMSHEIRSPL…TFTFILPYKV (242 aa)) folds into the Histidine kinase domain. Histidine 376 carries the post-translational modification Phosphohistidine; by autocatalysis. Disordered stretches follow at residues 620–639 (YSDD…EPDD) and 728–773 (NGRC…TEVK). A compositionally biased stretch (low complexity) spans 738-747 (SCSSSQASSE). Residues 761–773 (SHREEEKAETEVK) are compositionally biased toward basic and acidic residues. The Response regulatory domain maps to 779-921 (KILLVEDNKI…KLRECLQQYL (143 aa)). 3 residues coordinate Mg(2+): aspartate 785, aspartate 828, and cysteine 830. Aspartate 828 carries the 4-aspartylphosphate modification.

Interacts with AHP1, APH2, APH3, APH5 and APH6, but not with APH4. In terms of tissue distribution, present in light-grown but not in etiolated seedlings. Mostly expressed in roots flowers and siliques, and, to a lower extent, in stems and leaves, especially in guard cells.

It localises to the cell membrane. The protein localises to the cytoplasm. It carries out the reaction ATP + protein L-histidine = ADP + protein N-phospho-L-histidine.. Its function is as follows. Functions as a histidine kinase and transmits the stress signal to a downstream MAPK cascade. This protein undergoes an ATP-dependent autophosphorylation at a conserved histidine residue in the kinase core, and a phosphoryl group is then transferred to a conserved aspartate residue in the receiver domain. Negative regulator of the ETR1-dependent abscisic acid (ABA) and ethylene signaling pathway that inhibits the root elongation. Promotes stomatal closure. Regulates stomatal opening by integrating multiple signals via hydrogen peroxide H(2)O(2) homeostasis in guard cells in an ABA-independent manner. May contribute to basal defense mechanisms by closing stomata in the presence of bacterial pathogens. Regulates both hormone levels and ROS production in response to stress. Required for full immunity to bacterial pathogen and necrotrophic fungus. The protein is Histidine kinase 5 (AHK5) of Arabidopsis thaliana (Mouse-ear cress).